An 87-amino-acid chain; its full sequence is Small ribosomal subunit protein eS21 (87 aa).

This sequence belongs to the eukaryotic ribosomal protein eS21 family. Component of the small ribosomal subunit. Mature ribosomes consist of a small (40S) and a large (60S) subunit. The 40S subunit contains about 33 different proteins and 1 molecule of RNA (18S). The 60S subunit contains about 49 different proteins and 3 molecules of RNA (25S, 5.8S and 5S).

It is found in the cytoplasm. Required for the processing of the 20S rRNA-precursor to mature 18S rRNA in a late step of the maturation of 40S ribosomal subunits. Has a physiological role leading to 18S rRNA stability. This Candida glabrata (strain ATCC 2001 / BCRC 20586 / JCM 3761 / NBRC 0622 / NRRL Y-65 / CBS 138) (Yeast) protein is Small ribosomal subunit protein eS21 (RPS21).